The following is a 353-amino-acid chain: Trans-enoyl reductase RAP2 (353 aa).

An NADP(+)-binding site is contributed by 46–49 (CDHK). 131 to 138 (TGLSTIGM) is a substrate binding site. Residues 189-192 (SPRN), tyrosine 207, and 254-255 (LE) each bind NADP(+). Residue 274-278 (GMALL) coordinates substrate. An NADP(+)-binding site is contributed by 343–344 (VS).

Belongs to the zinc-containing alcohol dehydrogenase family. In terms of assembly, monomer.

It functions in the pathway secondary metabolite biosynthesis. Its function is as follows. Trans-enoyl reductase; part of the gene cluster that mediates the biosynthesis of a tyrosine-derived cytochalasan acting as a fungal signal recognized by resistant rice plants and leads to avirulence in Pi33 resistant rice cultivars. The first step in the pathway is catalyzed by the hybrid PKS-NRPS ACE1, assisted by the enoyl reductase RAP1, that are responsible for fusion of the tyrosine precursor and the polyketide backbone. The polyketide synthase module (PKS) of ACE1 is responsible for the synthesis of the polyketide backbone and the downstream nonribosomal peptide synthetase (NRPS) amidates the carboxyl end of the polyketide with the tyrosine precursor. Because ACE1 lacks a designated enoylreductase (ER) domain, the required activity is provided the enoyl reductase RAP1. Reduction by the hydrolyase ORFZ, followed by dehydration and intra-molecular Diels-Alder cyclization by the Diels-Alderase ORF3 then yield the required isoindolone-fused macrocycle. A number of oxidative steps catalyzed by the tailoring enzymes identified within the cluster, including cytochrome P450 monooxygenases CYP1 to CYP4, the FAD-linked oxidoreductase OXR2 and the short-chain dehydrogenase/reductase OXR1, are further required to afford the final cytochalasans that confer avirulence and which have still to be identified. The monooxygenase CYP1 has been shown to be a site-selective C-18 hydroxylase whereas the function of CYP3 is the site-selective epoxidation of the C-6/C-7 olefin that is present in some intermediate compounds. Finally, SYN2 and RAP2 are not required for avirulence in Pi33 resistant rice cultivars. The sequence is that of Trans-enoyl reductase RAP2 from Pyricularia oryzae (strain 70-15 / ATCC MYA-4617 / FGSC 8958) (Rice blast fungus).